A 479-amino-acid chain; its full sequence is Phosphoglycerate kinase, glycosomal (479 aa).

Val23, Asp24, Phe25, Asn26, Arg39, Ser61, His62, Gly64, Arg65, Arg132, His168, and Arg169 together coordinate (2R)-3-phosphoglycerate. Gly214 and Ala215 together coordinate ADP. CDP is bound at residue Gly214. AMP-binding residues include Ala215 and Lys216. ATP is bound at residue Ala215. Ala215 provides a ligand contact to Mg(2+). Lys216 serves as a coordination point for (2R)-3-phosphoglycerate. Asp219 serves as a coordination point for CDP. Asp219 provides a ligand contact to Mg(2+). 2 residues coordinate ADP: Lys220 and Gly238. Position 220 (Lys220) interacts with AMP. Lys220 serves as a coordination point for ATP. Gly238 lines the CDP pocket. The AMP site is built by Ala239 and Ala311. ATP is bound by residues Ala239 and Ala311. The ADP site is built by Ala311 and Asn335. Residues Gly336 and Phe341 each contribute to the CDP site. ADP contacts are provided by Phe341, Glu342, Asp374, and Thr375. Glu342 is an AMP binding site. ATP is bound by residues Glu342, Asp374, and Thr375. Residue Asp374 coordinates Mg(2+).

Belongs to the phosphoglycerate kinase family. In terms of assembly, monomer. It depends on Mg(2+) as a cofactor.

The protein resides in the glycosome. The enzyme catalyses (2R)-3-phosphoglycerate + ATP = (2R)-3-phospho-glyceroyl phosphate + ADP. Its pathway is carbohydrate degradation; glycolysis; pyruvate from D-glyceraldehyde 3-phosphate: step 2/5. The polypeptide is Phosphoglycerate kinase, glycosomal (PGKC) (Leishmania mexicana).